We begin with the raw amino-acid sequence, 387 residues long: Major outer membrane porin (387 aa).

The N-terminal stretch at 1–22 (MKKLLKSVLAFAVLGSASSLHA) is a signal peptide.

This sequence belongs to the chlamydial porin (CP) (TC 1.B.2) family. As to quaternary structure, part of a disulfide cross-linked outer membrane complex (COMC) composed of the major outer membrane porin (MOMP), the small cysteine-rich protein (OmcA) and the large cysteine-rich periplasmic protein (OmcB).

It is found in the cell outer membrane. Its function is as follows. In elementary bodies (EBs, the infectious stage, which is able to survive outside the host cell) provides the structural integrity of the outer envelope through disulfide cross-links with the small cysteine-rich protein and the large cysteine-rich periplasmic protein. It has been described in publications as the Sarkosyl-insoluble COMC (Chlamydia outer membrane complex), and serves as the functional equivalent of peptidoglycan. Permits diffusion of specific solutes through the outer membrane. The protein is Major outer membrane porin (ompA) of Chlamydia muridarum (strain MoPn / Nigg).